A 513-amino-acid chain; its full sequence is Arabinoxylan arabinofuranohydrolase (513 aa).

Residues 1–26 (MRKKCSVCLWILVLLLSCLSGKSAYA) form the signal peptide. Asp50 (proton acceptor) is an active-site residue. Residue Glu251 is the Proton donor of the active site. A substrate-binding site is contributed by Asn314. The CBM6 domain maps to 382 to 511 (NRVEAETFAW…LFNFDYWQFT (130 aa)). Ca(2+) is bound by residues Glu385, Glu387, Asn409, Gln410, and Asp506.

Its subcellular location is the secreted. The catalysed reaction is Hydrolysis of terminal non-reducing alpha-L-arabinofuranoside residues in alpha-L-arabinosides.. It functions in the pathway glycan degradation; xylan degradation. In terms of biological role, cleaves arabinose units from O-2- or O-3-monosubstituted xylose residues, thereby assisting in arabinoxylan (AX) and short-chain arabinoxylo-oligosaccharide (AXOS) degradation. Is more active on wheat bran AXOS than on wheat water-extractable AX and rye water-extractable AX. Does not display endoxylanase, xylosidase or arabinanase activity. This Bacillus subtilis (strain 168) protein is Arabinoxylan arabinofuranohydrolase (xynD).